We begin with the raw amino-acid sequence, 81 residues long: Kappa-theraphotoxin-Gr2c (81 aa).

Positions 1–19 (MKAFFVILGLALLCAYSFA) are cleaved as a signal peptide. Positions 20–50 (LEEQDQLSLRNDLLTVMFAENSELTPETEER) are excised as a propeptide. 3 disulfide bridges follow: cysteine 52-cysteine 66, cysteine 59-cysteine 71, and cysteine 65-cysteine 75.

This sequence belongs to the neurotoxin 30 (phrixotoxin) family. As to expression, expressed by the venom gland.

The protein localises to the secreted. Functionally, inhibits sodium channels Nav1.1/SCN1A (IC(50)=5.7 uM), Nav1.2/SCN2A (IC(50)=12 uM), Nav1.4/SCN4A (IC(50)=4 uM), Nav1.6/SCN8A (IC(50)=6.6 uM), Nav1.7/SCN9A (IC(50)=13.6-1030 nM), potassium channels Kv11.1/KCNH2 (IC(50)=4.7 uM), as well as high-voltage-gated calcium channels Cav1.2/CACNA1C (IC(50)= nM). Also blocks mechanosensitive ion channels (also named stretch-activated channels or SACs) and the hypotonic cell swelling induced calcium increase associated with the activation of such channels. It can thus be useful in treating cardiac ventricular disturbances. Also induces analgesia in mammals. This is Kappa-theraphotoxin-Gr2c from Grammostola rosea (Chilean rose tarantula).